A 483-amino-acid chain; its full sequence is NADH-quinone oxidoreductase subunit N (483 aa).

The next 14 helical transmembrane spans lie at 8 to 28 (INLA…GLLL), 45 to 65 (IAAG…GATQ), 78 to 98 (FAAF…VVSW), 106 to 126 (LGNG…MFMI), 131 to 151 (FLVL…LAAY), 166 to 186 (FVLG…IYGV), 206 to 226 (MLGI…KIAA), 241 to 261 (PTSV…AALF), 275 to 295 (WGPI…LAGL), 303 to 323 (LLAY…AVGN), 330 to 350 (VLVY…LILV), 373 to 393 (LALL…LAGF), 399 to 419 (IFMA…VLFS), and 452 to 472 (AIVG…GSLM).

Belongs to the complex I subunit 2 family. As to quaternary structure, NDH-1 is composed of 14 different subunits. Subunits NuoA, H, J, K, L, M, N constitute the membrane sector of the complex.

It is found in the cell inner membrane. It carries out the reaction a quinone + NADH + 5 H(+)(in) = a quinol + NAD(+) + 4 H(+)(out). In terms of biological role, NDH-1 shuttles electrons from NADH, via FMN and iron-sulfur (Fe-S) centers, to quinones in the respiratory chain. The immediate electron acceptor for the enzyme in this species is believed to be ubiquinone. Couples the redox reaction to proton translocation (for every two electrons transferred, four hydrogen ions are translocated across the cytoplasmic membrane), and thus conserves the redox energy in a proton gradient. The chain is NADH-quinone oxidoreductase subunit N from Magnetococcus marinus (strain ATCC BAA-1437 / JCM 17883 / MC-1).